The sequence spans 811 residues: Probable inorganic carbon transporter subunit DabA (811 aa).

Positions 336, 338, 498, and 513 each coordinate Zn(2+).

The protein belongs to the inorganic carbon transporter (TC 9.A.2) DabA family. As to quaternary structure, forms a complex with DabB. Zn(2+) serves as cofactor.

Its subcellular location is the cell inner membrane. In terms of biological role, part of an energy-coupled inorganic carbon pump. This is Probable inorganic carbon transporter subunit DabA from Rhodospirillum centenum (strain ATCC 51521 / SW).